The sequence spans 549 residues: Tegument protein (549 aa).

3 disordered regions span residues 50 to 92 (KKKA…TASP), 353 to 391 (ETGD…CSSY), and 523 to 542 (TPIK…TRSP). 2 stretches are compositionally biased toward polar residues: residues 75 to 84 (PQALSVPSLS) and 356 to 369 (DCSS…QTHR). Residues 523–534 (TPIKTTSSSSPR) are compositionally biased toward low complexity.

In terms of biological role, this viral structural protein may have important functions, such as protein kinase activity, DNA binding, and possible transcriptional activation of immediate-early genes. The protein is Tegument protein of Homo sapiens (Human).